The chain runs to 134 residues: Small ribosomal subunit protein uS8 (134 aa).

It belongs to the universal ribosomal protein uS8 family. Part of the 30S ribosomal subunit. Contacts proteins S5 and S12.

In terms of biological role, one of the primary rRNA binding proteins, it binds directly to 16S rRNA central domain where it helps coordinate assembly of the platform of the 30S subunit. The chain is Small ribosomal subunit protein uS8 from Sphingopyxis alaskensis (strain DSM 13593 / LMG 18877 / RB2256) (Sphingomonas alaskensis).